A 500-amino-acid polypeptide reads, in one-letter code: Polyenoic fatty acid isomerase (500 aa).

An N-terminal signal peptide occupies residues 1 to 21; the sequence is MSLNRVLHIFLIAYLACTALT.

Homodimer. It depends on an oxidized flavin as a cofactor. Glycosylated.

The catalysed reaction is (5Z,8Z,11Z,14Z,17Z)-eicosapentaenoate = (5Z,7E,9E,14Z,17Z)-icosapentaenoate. Functionally, involved in the biosynthesis of conjugated triene-containing fatty acids. Catalyzes the isomerization of a wide range of substrates containing three or more methylene interrupted olefins into a Z,E,E conjugated triene functionality. May be involved in a stress tolerance mechanism as response to intertidal habitats with direct sunlight, desiccation and high temperature. In vitro substrates include arachidonic acid ((5Z,8Z,11Z,14Z)-eicosatetraenoic acid), EPA ((5Z,8Z, 11Z,14Z,17Z)-eicosapentaenoic acid), DHA ((4Z,7Z,10Z,13Z,16Z,19Z)-docosahexenoic acid), adrenic acid ((7Z,10Z,13Z,16Z)-docosatetraenoic acid), anandamide (arachidonyl-N-ethanolamide) and eicosatrienoic acid ((5Z,8Z,11Z)-eicosatrienoic acid). Gamma-linolenic acid (18:3 6Z,9Z,12Z) and dihomo-gamma-linolenic acid (20:3 8Z,11Z,14Z) are transformed into mixtures of conjugated diene and triene fatty acids, linoleic acid is only transformed to a conjugated diene. The protein is Polyenoic fatty acid isomerase of Ptilota filicina (Red alga).